A 2248-amino-acid polypeptide reads, in one-letter code: Zinc finger protein 407 (2248 aa).

A compositionally biased stretch (basic and acidic residues) spans 1–32; it reads MMDSENKPENDEDEKINKEAQDLTKLSSHNED. The tract at residues 1-84 is disordered; it reads MMDSENKPEN…RRKLDEAEPL (84 aa). C2H2-type zinc fingers lie at residues 186 to 208, 215 to 238, and 244 to 268; these read LKCS…AESH, HTCC…KQAH, and FSCD…GKTH. 2 disordered regions span residues 291-322 and 494-515; these read KKSR…GLRN and SETQ…GLHS. Polar residues predominate over residues 494–504; it reads SETQEAEQGQG. C2H2-type zinc fingers lie at residues 528-551, 557-581, and 615-639; these read CACT…KRCH, FYCR…SNQH, and FLCT…TEKH. A disordered region spans residues 667–700; the sequence is ESENAKESMDDSGKASQEEPLKSRVSHGNEVRHS. Residues 669–699 are compositionally biased toward basic and acidic residues; it reads ENAKESMDDSGKASQEEPLKSRVSHGNEVRH. A C2H2-type 7 zinc finger spans residues 705 to 728; it reads FQCKKCFYKTRSSTVLTRHIKLRH. A disordered region spans residues 821–847; it reads LSQSGGSTKDDELASTTTPKRGRPKGN. 2 C2H2-type zinc fingers span residues 850–873 and 879–903; these read RTCS…RRKH and YLCK…TKKH. The interval 910–962 is disordered; that stretch reads EASGKHSSDIIVGPEGGSLEAGKKNAGSAVTMSDEHANKPAESPTSVLEKPDR. 2 consecutive C2H2-type zinc fingers follow at residues 1017–1040 and 1046–1070; these read NKCL…KRKH and FYCM…TEKH. Phosphoserine is present on serine 1262. 2 consecutive C2H2-type zinc fingers follow at residues 1444–1468 and 1486–1509; these read FHCL…SAGH and FKCV…KGQH. A C2H2-type 14; degenerate zinc finger spans residues 1537-1561; that stretch reads NVCKYCGKMCRSSNSMAFLAHIRTH. C2H2-type zinc fingers lie at residues 1567–1589, 1595–1618, 1628–1650, 1656–1680, 1686–1708, 1714–1736, 1742–1767, and 1773–1796; these read FKCK…VKRH, YKCH…LGKH, FTCH…MKLH, FKCT…YRTH, FLCD…RRQH, FKCD…KRVH, YRCP…TGKH, and YNCP…KEQH.

The protein resides in the nucleus. In terms of biological role, may be involved in transcriptional regulation. The sequence is that of Zinc finger protein 407 (ZNF407) from Homo sapiens (Human).